A 381-amino-acid chain; its full sequence is Homoserine O-succinyltransferase (381 aa).

The region spanning 45–360 is the AB hydrolase-1 domain; sequence NAVLVCHALN…PHGHDAFLLD (316 aa). The active-site Nucleophile is the Ser151. Residue Arg221 coordinates substrate. Residues Asp321 and His354 contribute to the active site. Asp355 lines the substrate pocket.

This sequence belongs to the AB hydrolase superfamily. MetX family. In terms of assembly, homodimer.

The protein resides in the cytoplasm. It carries out the reaction L-homoserine + succinyl-CoA = O-succinyl-L-homoserine + CoA. Its pathway is amino-acid biosynthesis; L-methionine biosynthesis via de novo pathway; O-succinyl-L-homoserine from L-homoserine: step 1/1. Its function is as follows. Transfers a succinyl group from succinyl-CoA to L-homoserine, forming succinyl-L-homoserine. The sequence is that of Homoserine O-succinyltransferase from Paraburkholderia phytofirmans (strain DSM 17436 / LMG 22146 / PsJN) (Burkholderia phytofirmans).